Consider the following 731-residue polypeptide: MNDQTPIGSGCPVHQPGGVRSLLGRTNKDWWPDMLATEILTPNGPSNPMGEDFDYAKAFKSLDYYALKDDLKALMTDSQPWWPADYGHYGPFFIRMAWHAAGTYRTADGRGGANSGQQRFAPLDSWPDNGNLDKARRLLWPIKQKYGNKISWADLFILAGNVAIESMGGPVFGFGGGRVDVYEPERDIYWGSEDKWVNQGVQTRIDPAKGMETIEGPLAAIQMGLIYVNPEGPQGNPHDDEGMARDMKETFKRMAMNDEETVALTAGGHTFGKAHGNGDPSLLGPAPAGSDLAAQGFGWVSSHESGGIGEHAVTSGIEGAWTNTPREWTENYFRLLFDYDYELVKSPAGAWQWQPINQKEEDMAPAAWDPGIKVPTMMTTADMALKRDPAYRAISERFRNDHEAFKDAFARAWFKLTHRDMGPKVRYLGPEVPDEDLIWQDPIPAGTKPSDAEVQAVKDKIAASGLTVSQLIKTAWASASTFRKSDFRGGANGARVRLAPQKDWEVNEPAMLARVLDTLDGLRGSLSMADAIVLGGVVGLEKAIRDAGFNVAVPFTGGRGDATQEQTDVESFEVMEPEADAFRNYVGKKKLAVKVEEMMLDKASLLGLSVPEMTVLIGGLRVLGANHGERGHGHFTRRSGQLTNDFFVNLLDMTNVWKAVEGSNDQEYVATDRTTGGETWRATRADLIFGSNSELRAVAEVYAENGHEEKFVRDFVKAWTKVMNADRFDLA.

The segment at residues 98 to 227 (WHAAGTYRTA…LAAIQMGLIY (130 aa)) is a cross-link (tryptophyl-tyrosyl-methioninium (Trp-Tyr) (with M-254)). The active-site Proton acceptor is histidine 99. Residues 227–254 (YVNPEGPQGNPHDDEGMARDMKETFKRM) constitute a cross-link (tryptophyl-tyrosyl-methioninium (Tyr-Met) (with W-98)). Histidine 269 provides a ligand contact to heme b.

It belongs to the peroxidase family. Peroxidase/catalase subfamily. Homodimer or homotetramer. Heme b is required as a cofactor. Formation of the three residue Trp-Tyr-Met cross-link is important for the catalase, but not the peroxidase activity of the enzyme.

It carries out the reaction H2O2 + AH2 = A + 2 H2O. The catalysed reaction is 2 H2O2 = O2 + 2 H2O. Functionally, bifunctional enzyme with both catalase and broad-spectrum peroxidase activity. The sequence is that of Catalase-peroxidase from Sphingopyxis alaskensis (strain DSM 13593 / LMG 18877 / RB2256) (Sphingomonas alaskensis).